The chain runs to 195 residues: Ribonuclease HII (195 aa).

The RNase H type-2 domain occupies 8–195; sequence WGVVGVDEAG…FAPVRRLLGG (188 aa). A divalent metal cation is bound by residues Asp-14, Glu-15, and Asp-106.

The protein belongs to the RNase HII family. Requires Mn(2+) as cofactor. The cofactor is Mg(2+).

It localises to the cytoplasm. The enzyme catalyses Endonucleolytic cleavage to 5'-phosphomonoester.. Functionally, endonuclease that specifically degrades the RNA of RNA-DNA hybrids. This Halorhodospira halophila (strain DSM 244 / SL1) (Ectothiorhodospira halophila (strain DSM 244 / SL1)) protein is Ribonuclease HII.